We begin with the raw amino-acid sequence, 55 residues long: Large ribosomal subunit protein bL33 (55 aa).

It belongs to the bacterial ribosomal protein bL33 family.

In Deinococcus geothermalis (strain DSM 11300 / CIP 105573 / AG-3a), this protein is Large ribosomal subunit protein bL33.